The primary structure comprises 765 residues: Probable dipeptidyl peptidase 4 (765 aa).

Residues 1–14 (MKWSILLLVGCAAA) form the signal peptide. Residues asparagine 35, asparagine 78, asparagine 101, asparagine 110, asparagine 169, asparagine 218, asparagine 465, and asparagine 490 are each glycosylated (N-linked (GlcNAc...) asparagine). The Charge relay system role is filled by serine 613. N-linked (GlcNAc...) asparagine glycosylation occurs at asparagine 665. Active-site charge relay system residues include aspartate 690 and histidine 725.

Belongs to the peptidase S9B family.

The protein localises to the secreted. The catalysed reaction is Release of an N-terminal dipeptide, Xaa-Yaa-|-Zaa-, from a polypeptide, preferentially when Yaa is Pro, provided Zaa is neither Pro nor hydroxyproline.. Extracellular dipeptidyl-peptidase which removes N-terminal dipeptides sequentially from polypeptides having unsubstituted N-termini provided that the penultimate residue is proline. This is Probable dipeptidyl peptidase 4 (dpp4) from Neosartorya fischeri (strain ATCC 1020 / DSM 3700 / CBS 544.65 / FGSC A1164 / JCM 1740 / NRRL 181 / WB 181) (Aspergillus fischerianus).